A 510-amino-acid polypeptide reads, in one-letter code: Bifunctional purine biosynthesis protein PurH (510 aa).

Residues Met1 to Cys142 enclose the MGS-like domain.

This sequence belongs to the PurH family.

The catalysed reaction is (6R)-10-formyltetrahydrofolate + 5-amino-1-(5-phospho-beta-D-ribosyl)imidazole-4-carboxamide = 5-formamido-1-(5-phospho-D-ribosyl)imidazole-4-carboxamide + (6S)-5,6,7,8-tetrahydrofolate. It catalyses the reaction IMP + H2O = 5-formamido-1-(5-phospho-D-ribosyl)imidazole-4-carboxamide. It functions in the pathway purine metabolism; IMP biosynthesis via de novo pathway; 5-formamido-1-(5-phospho-D-ribosyl)imidazole-4-carboxamide from 5-amino-1-(5-phospho-D-ribosyl)imidazole-4-carboxamide (10-formyl THF route): step 1/1. Its pathway is purine metabolism; IMP biosynthesis via de novo pathway; IMP from 5-formamido-1-(5-phospho-D-ribosyl)imidazole-4-carboxamide: step 1/1. This is Bifunctional purine biosynthesis protein PurH from Campylobacter jejuni subsp. doylei (strain ATCC BAA-1458 / RM4099 / 269.97).